The primary structure comprises 684 residues: Pheromone-processing carboxypeptidase KEX1 (684 aa).

Residues 1–16 (MRFWYFSAILWVVCQA) form the signal peptide. Residues 17-588 (LPSKKQYSVA…QRKRRKGTFK (572 aa)) are Lumenal-facing. Residues Ser-181 and Asp-390 contribute to the active site. N-linked (GlcNAc...) asparagine glycans are attached at residues Asn-443 and Asn-451. Residue His-454 is part of the active site. Residues 498-582 (DNSKLGVLGI…KEEQDRQRKR (85 aa)) are disordered. A compositionally biased stretch (acidic residues) spans 514-547 (EEEELEEEFDQYVDELEEGESESGLLDDDKEDET). Over residues 554–578 (NDDKNKGGEDKPNENPDKEKEEQDR) the composition is skewed to basic and acidic residues. The helical transmembrane segment at 589–609 (IFGITILVVLTLGSFVFYIYI) threads the bilayer. Topologically, residues 610 to 684 (RKHTNKTRAI…LDESFELENL (75 aa)) are cytoplasmic. Residues 641–684 (LEHGYDFETDQSQPRSGQSAPKKNGSYTRVPNTELDESFELENL) are disordered. The span at 650-671 (DQSQPRSGQSAPKKNGSYTRVP) shows a compositional bias: polar residues. A compositionally biased stretch (acidic residues) spans 674–684 (ELDESFELENL).

It belongs to the peptidase S10 family.

The protein resides in the golgi apparatus. The protein localises to the trans-Golgi network membrane. The catalysed reaction is Preferential release of a C-terminal arginine or lysine residue.. In terms of biological role, protease with a carboxypeptidase B-like function involved in the C-terminal processing of the lysine and arginine residues from protein precursors. Promotes cell fusion and is involved in the programmed cell death. The sequence is that of Pheromone-processing carboxypeptidase KEX1 (KEX1) from Zygosaccharomyces rouxii (strain ATCC 2623 / CBS 732 / NBRC 1130 / NCYC 568 / NRRL Y-229).